Reading from the N-terminus, the 288-residue chain is 4-diphosphocytidyl-2-C-methyl-D-erythritol kinase (288 aa).

Residue lysine 8 is part of the active site. 90 to 100 (PVGAGLAGGSS) contacts ATP. Residue aspartate 132 is part of the active site.

This sequence belongs to the GHMP kinase family. IspE subfamily.

The enzyme catalyses 4-CDP-2-C-methyl-D-erythritol + ATP = 4-CDP-2-C-methyl-D-erythritol 2-phosphate + ADP + H(+). It participates in isoprenoid biosynthesis; isopentenyl diphosphate biosynthesis via DXP pathway; isopentenyl diphosphate from 1-deoxy-D-xylulose 5-phosphate: step 3/6. Its function is as follows. Catalyzes the phosphorylation of the position 2 hydroxy group of 4-diphosphocytidyl-2C-methyl-D-erythritol. The sequence is that of 4-diphosphocytidyl-2-C-methyl-D-erythritol kinase from Chlamydia trachomatis serovar L2b (strain UCH-1/proctitis).